The following is a 396-amino-acid chain: 1-deoxy-D-xylulose 5-phosphate reductoisomerase (396 aa).

T15, G16, S17, I18, G41, and N129 together coordinate NADPH. K130 contributes to the 1-deoxy-D-xylulose 5-phosphate binding site. E131 contributes to the NADPH binding site. D155 is a Mn(2+) binding site. Residues S156, E157, S182, and H205 each coordinate 1-deoxy-D-xylulose 5-phosphate. E157 contributes to the Mn(2+) binding site. G211 contacts NADPH. 1-deoxy-D-xylulose 5-phosphate contacts are provided by S218, N223, K224, and E227. E227 serves as a coordination point for Mn(2+).

This sequence belongs to the DXR family. It depends on Mg(2+) as a cofactor. Requires Mn(2+) as cofactor.

The enzyme catalyses 2-C-methyl-D-erythritol 4-phosphate + NADP(+) = 1-deoxy-D-xylulose 5-phosphate + NADPH + H(+). The protein operates within isoprenoid biosynthesis; isopentenyl diphosphate biosynthesis via DXP pathway; isopentenyl diphosphate from 1-deoxy-D-xylulose 5-phosphate: step 1/6. Functionally, catalyzes the NADPH-dependent rearrangement and reduction of 1-deoxy-D-xylulose-5-phosphate (DXP) to 2-C-methyl-D-erythritol 4-phosphate (MEP). In Xanthomonas campestris pv. campestris (strain B100), this protein is 1-deoxy-D-xylulose 5-phosphate reductoisomerase.